Here is a 129-residue protein sequence, read N- to C-terminus: UPF0102 protein Mnod_0024 (129 aa).

It belongs to the UPF0102 family.

The chain is UPF0102 protein Mnod_0024 from Methylobacterium nodulans (strain LMG 21967 / CNCM I-2342 / ORS 2060).